Consider the following 116-residue polypeptide: MNLITTIITITITLSAVLATISFWLPQISPDAEKLSPYECGFDPLGSARLPFSLRFFLIAILFLLFDLEIALLLPLPWGDQLNTPALTLVWSTAVLALLTLGLIYEWTQGGLEWAE.

The next 3 membrane-spanning stretches (helical) occupy residues 3-23, 56-76, and 85-105; these read LITT…TISF, FFLI…LLPL, and PALT…GLIY.

Belongs to the complex I subunit 3 family.

The protein localises to the mitochondrion membrane. The catalysed reaction is a ubiquinone + NADH + 5 H(+)(in) = a ubiquinol + NAD(+) + 4 H(+)(out). In terms of biological role, core subunit of the mitochondrial membrane respiratory chain NADH dehydrogenase (Complex I) that is believed to belong to the minimal assembly required for catalysis. Complex I functions in the transfer of electrons from NADH to the respiratory chain. The immediate electron acceptor for the enzyme is believed to be ubiquinone. This is NADH-ubiquinone oxidoreductase chain 3 (MT-ND3) from Oncorhynchus masou (Cherry salmon).